The chain runs to 802 residues: MKKKNIKNSMNNHTPMIKQYLSLKSQYPDMLLFYQMGDFYELFYEDAERISELLKITLTKKGYSNHKIIPMAGVPCHKSEYYLSKLVKLGESIAICDQQKETDCKKKLISRKVVRIITPGTVTDEVLLEENEDNFIAAIWKENNQFGYSVLDLSLGFFGVSKIFSSCDLLSEIERTNPKEILYPENFSDVFLIESRKCIRKRSLLEFDLETSYKLLNLQFNTCSLDGFGIEKNNFVIRAAGCLLQYVKSMNMTVLPNIRQLKYNYMEDSIFMNFSTRKSLEITQNISGEKKNTLSAILNKTVTSMGSRMLNRWLNSPLKNFKIVRNRHESVEALQFFYKELQFILRQVNDLERIYSRLALRTASPHDFVRMRSTLEILPNLHLILKKIKSKHIKKIRLSIGYFEEVLCLLKKAISLKPSKCIRDGGVIAELYNIELDELRSIKINSKEYIKNFEQKEKKKLMIESFKIKFNKIIGYYIQISKRHTHLIPKYYVIIQTLKNTERYSVPLLKEYEEKVLNSEMRSLLLEKKLYAEIFNIIEPFLEKLQNSALALSELDVLVNLSERAISLNYTRPIMSEKYGISLLESRHPVVECFLKTPFIKNSVFLSRTQRMIIITGPNMGGKSTYMRQIALIVIMAGIGSFVPARYALIGSIDKIFTRIGSADDLSNGYSTFMMEMMEISNILHNATSNSLVLIDELGRGTSTNEGLSLAWSCSRYLININKSMTLLSTHFVELTKLEEKEKFVKNFHFSAIKSDLHIAFLYKIKNGISKKSYGISVASLSGLPDSVLEDAEKKLIEIENT.

Residue 617–624 (GPNMGGKS) participates in ATP binding.

This sequence belongs to the DNA mismatch repair MutS family.

Functionally, this protein is involved in the repair of mismatches in DNA. It is possible that it carries out the mismatch recognition step. This protein has a weak ATPase activity. The chain is DNA mismatch repair protein MutS from Buchnera aphidicola subsp. Acyrthosiphon pisum (strain Tuc7).